A 133-amino-acid chain; its full sequence is Profilin-1 (133 aa).

The cysteines at positions 95 and 117 are disulfide-linked.

The protein belongs to the profilin family. Dimer and tetramer. Occurs in many kinds of cells as a complex with monomeric actin in a 1:1 ratio.

The protein resides in the cytoplasm. It is found in the cytoskeleton. Functionally, binds to actin and affects the structure of the cytoskeleton. At high concentrations, profilin prevents the polymerization of actin, whereas it enhances it at low concentrations. By binding to PIP2, it inhibits the formation of IP3 and DG. Possesses high binding affinity for poly(L-proline). The sequence is that of Profilin-1 from Artemisia vulgaris (Mugwort).